The chain runs to 118 residues: UPF0102 protein Dtur_1530 (118 aa).

This sequence belongs to the UPF0102 family.

This Dictyoglomus turgidum (strain DSM 6724 / Z-1310) protein is UPF0102 protein Dtur_1530.